A 104-amino-acid polypeptide reads, in one-letter code: Small ribosomal subunit protein uS10 (104 aa).

Belongs to the universal ribosomal protein uS10 family. As to quaternary structure, part of the 30S ribosomal subunit.

Functionally, involved in the binding of tRNA to the ribosomes. The protein is Small ribosomal subunit protein uS10 of Aliarcobacter butzleri (strain RM4018) (Arcobacter butzleri).